The sequence spans 357 residues: 3-isopropylmalate dehydrogenase (357 aa).

77–90 contributes to the NAD(+) binding site; sequence GPKWDNLEGSKRPE. Residues Arg97, Arg107, Arg136, and Asp224 each contribute to the substrate site. Mg(2+) is bound by residues Asp224, Asp248, and Asp252. 282-294 contacts NAD(+); that stretch reads GSAPDIAGLDIAN.

Belongs to the isocitrate and isopropylmalate dehydrogenases family. LeuB type 1 subfamily. In terms of assembly, homodimer. The cofactor is Mg(2+). Mn(2+) is required as a cofactor.

Its subcellular location is the cytoplasm. The catalysed reaction is (2R,3S)-3-isopropylmalate + NAD(+) = 4-methyl-2-oxopentanoate + CO2 + NADH. It functions in the pathway amino-acid biosynthesis; L-leucine biosynthesis; L-leucine from 3-methyl-2-oxobutanoate: step 3/4. Functionally, catalyzes the oxidation of 3-carboxy-2-hydroxy-4-methylpentanoate (3-isopropylmalate) to 3-carboxy-4-methyl-2-oxopentanoate. The product decarboxylates to 4-methyl-2 oxopentanoate. In Clostridium pasteurianum, this protein is 3-isopropylmalate dehydrogenase (leuB).